Reading from the N-terminus, the 53-residue chain is Dihydrolipoyl dehydrogenase (53 aa).

FAD contacts are provided by residues 35–44 and lysine 53; that span reads EKYPTFGGTC. A disulfide bridge links cysteine 44 with cysteine 49.

The protein belongs to the class-I pyridine nucleotide-disulfide oxidoreductase family. In terms of assembly, homodimer. The cofactor is FAD.

The protein localises to the mitochondrion. The catalysed reaction is N(6)-[(R)-dihydrolipoyl]-L-lysyl-[protein] + NAD(+) = N(6)-[(R)-lipoyl]-L-lysyl-[protein] + NADH + H(+). Its activity is regulated as follows. Lipoamide reduction and the NADH -&gt; NAD reaction are both completely inhibited by copper and cadmium ions. Its function is as follows. Lipoamide dehydrogenase is a component of the glycine cleavage system as well as of the alpha-ketoacid dehydrogenase complexes. This enzyme has lipoamide dehydrogenase activity and NADH -&gt; NAD transhydrogenation activity. Also displays some NADH-ferricyanide reductase and NADPH -&gt; NAD transydrogenation activities. In Hymenolepis diminuta (Rat tapeworm), this protein is Dihydrolipoyl dehydrogenase.